A 127-amino-acid polypeptide reads, in one-letter code: Histone H2B.2 (127 aa).

The segment at 1 to 35 is disordered; the sequence is MAPKAEKKPASKAPAAKKTTASTDASKKRTKTRKE. Residues K7 and K8 each carry the N6-acetyllysine; alternate modification. Glycyl lysine isopeptide (Lys-Gly) (interchain with G-Cter in SUMO); alternate cross-links involve residues K7 and K8. Residue S11 is modified to Phosphoserine. Low complexity predominate over residues 11-24; that stretch reads SKAPAAKKTTASTD. Position 12 is an N6-acetyllysine (K12). Residue K120 forms a Glycyl lysine isopeptide (Lys-Gly) (interchain with G-Cter in ubiquitin) linkage.

Belongs to the histone H2B family. As to quaternary structure, the nucleosome is a histone octamer containing two molecules each of H2A, H2B, H3 and H4 assembled in one H3-H4 heterotetramer and two H2A-H2B heterodimers. The octamer wraps approximately 147 bp of DNA. Monoubiquitinated by the UBC2-BRE1 complex to form H2BK123ub1. H2BK123ub1 gives a specific tag for epigenetic transcriptional activation and is also prerequisite for H3K4me and H3K79me formation. H2BK123ub1 also modulates the formation of double-strand breaks during meiosis and is a prerequisite for DNA-damage checkpoint activation. In terms of processing, phosphorylated by STE20 to form H2BS10ph during progression through meiotic prophase. May be correlated with chromosome condensation. Post-translationally, acetylation of N-terminal lysines and particularly formation of H2BK11ac has a positive effect on transcription. Sumoylation to form H2BK6su or H2BK7su occurs preferentially near the telomeres and represses gene transcription.

It localises to the nucleus. The protein localises to the chromosome. Its function is as follows. Core component of nucleosome. Nucleosomes wrap and compact DNA into chromatin, limiting DNA accessibility to the cellular machineries which require DNA as a template. Histones thereby play a central role in transcription regulation, DNA repair, DNA replication and chromosomal stability. DNA accessibility is regulated via a complex set of post-translational modifications of histones, also called histone code, and nucleosome remodeling. The polypeptide is Histone H2B.2 (HTB2) (Eremothecium gossypii (strain ATCC 10895 / CBS 109.51 / FGSC 9923 / NRRL Y-1056) (Yeast)).